The chain runs to 508 residues: Maturase K (508 aa).

Belongs to the intron maturase 2 family. MatK subfamily.

It is found in the plastid. The protein resides in the chloroplast. In terms of biological role, usually encoded in the trnK tRNA gene intron. Probably assists in splicing its own and other chloroplast group II introns. This Stewartia pseudocamellia (Japanese stewartia) protein is Maturase K.